Reading from the N-terminus, the 72-residue chain is Large ribosomal subunit protein uL29 (72 aa).

The protein belongs to the universal ribosomal protein uL29 family.

The sequence is that of Large ribosomal subunit protein uL29 (rpmC) from Chlamydia pneumoniae (Chlamydophila pneumoniae).